The sequence spans 63 residues: Large ribosomal subunit protein bL35 (63 aa).

It belongs to the bacterial ribosomal protein bL35 family.

The protein is Large ribosomal subunit protein bL35 of Sulfurovum sp. (strain NBC37-1).